The following is a 212-amino-acid chain: Pyridoxine/pyridoxamine 5'-phosphate oxidase (212 aa).

Residues 7 to 10 (RREY) and Lys-66 each bind substrate. Residues 61 to 66 (RIVLLK), 76 to 77 (YT), Lys-83, and Gln-105 contribute to the FMN site. Positions 123, 127, and 131 each coordinate substrate. FMN-binding positions include 140–141 (QS) and Trp-185. 191 to 193 (RLH) serves as a coordination point for substrate. Arg-195 serves as a coordination point for FMN.

The protein belongs to the pyridoxamine 5'-phosphate oxidase family. Homodimer. FMN serves as cofactor.

The enzyme catalyses pyridoxamine 5'-phosphate + O2 + H2O = pyridoxal 5'-phosphate + H2O2 + NH4(+). The catalysed reaction is pyridoxine 5'-phosphate + O2 = pyridoxal 5'-phosphate + H2O2. Its pathway is cofactor metabolism; pyridoxal 5'-phosphate salvage; pyridoxal 5'-phosphate from pyridoxamine 5'-phosphate: step 1/1. The protein operates within cofactor metabolism; pyridoxal 5'-phosphate salvage; pyridoxal 5'-phosphate from pyridoxine 5'-phosphate: step 1/1. In terms of biological role, catalyzes the oxidation of either pyridoxine 5'-phosphate (PNP) or pyridoxamine 5'-phosphate (PMP) into pyridoxal 5'-phosphate (PLP). The polypeptide is Pyridoxine/pyridoxamine 5'-phosphate oxidase (Idiomarina loihiensis (strain ATCC BAA-735 / DSM 15497 / L2-TR)).